The chain runs to 352 residues: N-acetyl-gamma-glutamyl-phosphate reductase (352 aa).

C155 is a catalytic residue.

The protein belongs to the NAGSA dehydrogenase family. Type 1 subfamily.

The protein localises to the cytoplasm. The enzyme catalyses N-acetyl-L-glutamate 5-semialdehyde + phosphate + NADP(+) = N-acetyl-L-glutamyl 5-phosphate + NADPH + H(+). The protein operates within amino-acid biosynthesis; L-arginine biosynthesis; N(2)-acetyl-L-ornithine from L-glutamate: step 3/4. In terms of biological role, catalyzes the NADPH-dependent reduction of N-acetyl-5-glutamyl phosphate to yield N-acetyl-L-glutamate 5-semialdehyde. This Synechococcus elongatus (strain ATCC 33912 / PCC 7942 / FACHB-805) (Anacystis nidulans R2) protein is N-acetyl-gamma-glutamyl-phosphate reductase.